A 470-amino-acid chain; its full sequence is Pyruvate kinase I (470 aa).

A substrate-binding site is contributed by Arg-32. K(+) contacts are provided by Asn-34, Ser-36, Asp-66, and Thr-67. 34–37 lines the ATP pocket; it reads NFSH. 2 residues coordinate ATP: Arg-73 and Lys-156. Lys-220 contributes to the substrate binding site. Glu-222 provides a ligand contact to Mg(2+). Residues Gly-245, Asp-246, and Thr-278 each contribute to the substrate site. Asp-246 lines the Mg(2+) pocket.

This sequence belongs to the pyruvate kinase family. Homotetramer. Mg(2+) is required as a cofactor. It depends on K(+) as a cofactor.

It catalyses the reaction pyruvate + ATP = phosphoenolpyruvate + ADP + H(+). The protein operates within carbohydrate degradation; glycolysis; pyruvate from D-glyceraldehyde 3-phosphate: step 5/5. Its activity is regulated as follows. Belongs to type I PK; fructose 1,6-bisphosphate-activated. Its function is as follows. Catalyzes the formation of pyruvate in the last step of glycolysis, it is irreversible under physiological conditions. The reaction is critical for the control of metabolic flux in the second part of glycolysis. In Salmonella typhimurium (strain LT2 / SGSC1412 / ATCC 700720), this protein is Pyruvate kinase I (pykF).